Consider the following 480-residue polypeptide: Plant UBX domain-containing protein 10 (480 aa).

Disordered stretches follow at residues 47–78 and 335–383; these read DASS…PRGI and ADQA…AARV. A coiled-coil region spans residues 330–389; the sequence is RAALEADQAREQQRQEEKERLEREAAEAERKLKEEEEARERAAREAEERQAARVRMRQEK. Basic and acidic residues predominate over residues 336-383; the sequence is DQAREQQRQEEKERLEREAAEAERKLKEEEEARERAAREAEERQAARV. The 79-residue stretch at 399–477 folds into the UBX domain; the sequence is KGPDVTQVLV…GLHPQASLFI (79 aa).

The polypeptide is Plant UBX domain-containing protein 10 (Arabidopsis thaliana (Mouse-ear cress)).